A 179-amino-acid polypeptide reads, in one-letter code: MNPELLPIIQLGNPTLRQKAAWVENIHDATIQQLIDDLIATVAKANGVGIASPQVAQSYRLFIVASRPNPRYPHAPEMEPTAMINPKIVGHSTEIVEGWEGCLSVPGIRGLVPRHQAIEVEYTDRYGNLQKQTLTDFVARIFQHEFDHLDGVLFIDRVESNLNTITEEEYQELVTKNTK.

The Fe cation site is built by Cys102 and His144. Residue Glu145 is part of the active site. His148 contributes to the Fe cation binding site.

It belongs to the polypeptide deformylase family. Fe(2+) is required as a cofactor.

The enzyme catalyses N-terminal N-formyl-L-methionyl-[peptide] + H2O = N-terminal L-methionyl-[peptide] + formate. Removes the formyl group from the N-terminal Met of newly synthesized proteins. Requires at least a dipeptide for an efficient rate of reaction. N-terminal L-methionine is a prerequisite for activity but the enzyme has broad specificity at other positions. The protein is Peptide deformylase 2 of Nostoc sp. (strain PCC 7120 / SAG 25.82 / UTEX 2576).